The chain runs to 236 residues: 2-C-methyl-D-erythritol 4-phosphate cytidylyltransferase (236 aa).

Belongs to the IspD/TarI cytidylyltransferase family. IspD subfamily.

It carries out the reaction 2-C-methyl-D-erythritol 4-phosphate + CTP + H(+) = 4-CDP-2-C-methyl-D-erythritol + diphosphate. Its pathway is isoprenoid biosynthesis; isopentenyl diphosphate biosynthesis via DXP pathway; isopentenyl diphosphate from 1-deoxy-D-xylulose 5-phosphate: step 2/6. Catalyzes the formation of 4-diphosphocytidyl-2-C-methyl-D-erythritol from CTP and 2-C-methyl-D-erythritol 4-phosphate (MEP). This is 2-C-methyl-D-erythritol 4-phosphate cytidylyltransferase from Alkaliphilus oremlandii (strain OhILAs) (Clostridium oremlandii (strain OhILAs)).